We begin with the raw amino-acid sequence, 151 residues long: Ribosome maturation factor RimP (151 aa).

It belongs to the RimP family.

The protein localises to the cytoplasm. Required for maturation of 30S ribosomal subunits. This chain is Ribosome maturation factor RimP, found in Thermoanaerobacter sp. (strain X514).